Consider the following 286-residue polypeptide: Probable endonuclease 4 (286 aa).

Positions 67, 107, 144, 178, 181, 215, 228, 230, and 260 each coordinate Zn(2+).

The protein belongs to the AP endonuclease 2 family. Requires Zn(2+) as cofactor.

It carries out the reaction Endonucleolytic cleavage to 5'-phosphooligonucleotide end-products.. Functionally, endonuclease IV plays a role in DNA repair. It cleaves phosphodiester bonds at apurinic or apyrimidinic (AP) sites, generating a 3'-hydroxyl group and a 5'-terminal sugar phosphate. This is Probable endonuclease 4 from Chloroflexus aggregans (strain MD-66 / DSM 9485).